The primary structure comprises 356 residues: Phosphate acyltransferase (356 aa).

The protein belongs to the PlsX family. Homodimer. Probably interacts with PlsY.

Its subcellular location is the cytoplasm. It carries out the reaction a fatty acyl-[ACP] + phosphate = an acyl phosphate + holo-[ACP]. Its pathway is lipid metabolism; phospholipid metabolism. Its function is as follows. Catalyzes the reversible formation of acyl-phosphate (acyl-PO(4)) from acyl-[acyl-carrier-protein] (acyl-ACP). This enzyme utilizes acyl-ACP as fatty acyl donor, but not acyl-CoA. The protein is Phosphate acyltransferase of Escherichia coli (strain 55989 / EAEC).